We begin with the raw amino-acid sequence, 177 residues long: Large ribosomal subunit protein bL31m (177 aa).

A mitochondrion-targeting transit peptide spans 1-14; it reads MLKSIFAKRFASTG. The interval 36-118 is sufficient for general mitochondrial translation; sequence KSRPAIYHQF…FSVDSTTPNS (83 aa). Residues 87–177 form a sufficient for dosage suppression of COX2 mutation region; sequence LVVVDANSGG…KLASKKRDKK (91 aa). The span at 111-123 shows a compositional bias: polar residues; sequence VDSTTPNSSSETV. The segment at 111 to 144 is disordered; that stretch reads VDSTTPNSSSETVELSEENKKKTQIKKEEKEDVS. Positions 127-144 are enriched in basic and acidic residues; the sequence is EENKKKTQIKKEEKEDVS.

This sequence belongs to the bacterial ribosomal protein bL31 family. Highly divergent. Component of the mitochondrial large ribosomal subunit (mt-LSU). Mature yeast 74S mitochondrial ribosomes consist of a small (37S) and a large (54S) subunit. The 37S small subunit contains a 15S ribosomal RNA (15S mt-rRNA) and 34 different proteins. The 54S large subunit contains a 21S rRNA (21S mt-rRNA) and 46 different proteins.

The protein resides in the mitochondrion. Its function is as follows. Component of the mitochondrial ribosome (mitoribosome), a dedicated translation machinery responsible for the synthesis of mitochondrial genome-encoded proteins, including at least some of the essential transmembrane subunits of the mitochondrial respiratory chain. The mitoribosomes are attached to the mitochondrial inner membrane and translation products are cotranslationally integrated into the membrane. Overexpression of bL31m suppresses mutations in the COX2 leader peptide-encoding and initiation codon regions. The polypeptide is Large ribosomal subunit protein bL31m (MRPL36) (Saccharomyces cerevisiae (strain ATCC 204508 / S288c) (Baker's yeast)).